A 329-amino-acid polypeptide reads, in one-letter code: Probable carboxylesterase 13 (329 aa).

Position 1 is an N-acetylmethionine (Met-1). The Involved in the stabilization of the negatively charged intermediate by the formation of the oxyanion hole signature appears at 81 to 83 (HGG). Catalysis depends on residues Ser-165, Asp-269, and His-302.

It belongs to the 'GDXG' lipolytic enzyme family. As to expression, expressed in flowers.

The catalysed reaction is a carboxylic ester + H2O = an alcohol + a carboxylate + H(+). Its function is as follows. Carboxylesterase acting on esters with varying acyl chain length. The protein is Probable carboxylesterase 13 (CXE13) of Arabidopsis thaliana (Mouse-ear cress).